Reading from the N-terminus, the 270-residue chain is Type III pantothenate kinase (270 aa).

D6–V13 is an ATP binding site. G109 to R112 serves as a coordination point for substrate. Catalysis depends on D111, which acts as the Proton acceptor. K(+) is bound at residue D131. Residue S134 coordinates ATP. T186 provides a ligand contact to substrate.

The protein belongs to the type III pantothenate kinase family. Homodimer. It depends on NH4(+) as a cofactor. K(+) is required as a cofactor.

It localises to the cytoplasm. The enzyme catalyses (R)-pantothenate + ATP = (R)-4'-phosphopantothenate + ADP + H(+). It participates in cofactor biosynthesis; coenzyme A biosynthesis; CoA from (R)-pantothenate: step 1/5. Catalyzes the phosphorylation of pantothenate (Pan), the first step in CoA biosynthesis. In Mycolicibacterium gilvum (strain PYR-GCK) (Mycobacterium gilvum (strain PYR-GCK)), this protein is Type III pantothenate kinase.